A 229-amino-acid polypeptide reads, in one-letter code: Ribonuclease 3 (229 aa).

Positions 5-127 (LSRLERQLGY…LIGAIYLDAG (123 aa)) constitute an RNase III domain. Glutamate 40 is a Mg(2+) binding site. Aspartate 44 is a catalytic residue. Mg(2+)-binding residues include aspartate 113 and glutamate 116. Residue glutamate 116 is part of the active site. The 71-residue stretch at 154 to 224 (DPKTRLQEFL…AAAALIALGV (71 aa)) folds into the DRBM domain.

This sequence belongs to the ribonuclease III family. In terms of assembly, homodimer. Requires Mg(2+) as cofactor.

It localises to the cytoplasm. The catalysed reaction is Endonucleolytic cleavage to 5'-phosphomonoester.. Its function is as follows. Digests double-stranded RNA. Involved in the processing of primary rRNA transcript to yield the immediate precursors to the large and small rRNAs (23S and 16S). Processes some mRNAs, and tRNAs when they are encoded in the rRNA operon. Processes pre-crRNA and tracrRNA of type II CRISPR loci if present in the organism. This is Ribonuclease 3 from Pseudomonas fluorescens (strain ATCC BAA-477 / NRRL B-23932 / Pf-5).